The primary structure comprises 1136 residues: Tyrosine-protein kinase receptor Tie-1 (1136 aa).

The signal sequence occupies residues 1–23 (MVWLEPPLLLPIFFLASHVGAAV). Residues 24 to 757 (DLTLLADLRL…IHAAEEGLDQ (734 aa)) lie on the Extracellular side of the membrane. Residues 43-106 (CVSGEAGAGR…PSDLVGVFSC (64 aa)) enclose the Ig-like C2-type 1 domain. N-linked (GlcNAc...) asparagine glycans are attached at residues asparagine 84 and asparagine 159. 3 consecutive EGF-like domains span residues 212-254 (GCEA…TRCE), 256-301 (ACRE…SQCQ), and 303-343 (ACAP…MHCE). 3 disulfides stabilise this stretch: cysteine 226-cysteine 235, cysteine 229-cysteine 242, and cysteine 244-cysteine 253. 3 disulfide bridges follow: cysteine 317–cysteine 325, cysteine 319–cysteine 331, and cysteine 333–cysteine 342. Residues 370–424 (CAAAGNPFPVRGSMELRKPDGTVLLSTKAIVEPDRTTAEFEVPRLALGDSGLWEC) enclose the Ig-like C2-type 2 domain. Fibronectin type-III domains follow at residues 444–543 (PPVP…CPEP), 546–640 (KPWL…LPPS), and 644–737 (APRH…TLGN). N-linked (GlcNAc...) asparagine glycosylation is found at asparagine 501, asparagine 594, and asparagine 707. A helical membrane pass occupies residues 758–782 (QLVLAVVGSVSATCLTILAALLTLA). The Cytoplasmic segment spans residues 783–1136 (CIRKSCLHRR…AGIDATAEEA (354 aa)). One can recognise a Protein kinase domain in the interval 837 to 1116 (ITFEDLIGEG…RMLEARKAYV (280 aa)). Residues 843 to 851 (IGEGNFGQV) and lysine 868 each bind ATP. Aspartate 977 (proton acceptor) is an active-site residue. Phosphotyrosine; by autocatalysis is present on tyrosine 1005.

Belongs to the protein kinase superfamily. Tyr protein kinase family. Tie subfamily. In terms of assembly, heterodimer with TEK/TIE2. Interacts with SVEP1 (via C-terminus). In terms of processing, phosphorylated on tyrosine residues in response to ANGPT1, most likely by TEK/TIE2. Specifically expressed in developing vascular endothelial cells.

It localises to the cell membrane. The catalysed reaction is L-tyrosyl-[protein] + ATP = O-phospho-L-tyrosyl-[protein] + ADP + H(+). In terms of biological role, transmembrane tyrosine-protein kinase that may modulate TEK/TIE2 activity and contribute to the regulation of angiogenesis. This chain is Tyrosine-protein kinase receptor Tie-1 (TIE1), found in Bos taurus (Bovine).